A 225-amino-acid polypeptide reads, in one-letter code: Endonuclease V (225 aa).

Residues Asp-43 and Asp-110 each coordinate Mg(2+). Interaction with target DNA regions lie at residues 139 to 141 and 214 to 221; these read KSR and HIYTQRLK.

This sequence belongs to the endonuclease V family. Mg(2+) is required as a cofactor.

Its subcellular location is the cytoplasm. The catalysed reaction is Endonucleolytic cleavage at apurinic or apyrimidinic sites to products with a 5'-phosphate.. In terms of biological role, DNA repair enzyme involved in the repair of deaminated bases. Selectively cleaves double-stranded DNA at the second phosphodiester bond 3' to a deoxyinosine leaving behind the intact lesion on the nicked DNA. In vitro, can also cleave single-stranded substrates with inosine, double-stranded DNA with apurinic sites, or DNA sites with uracil or a mismatched base. When present in molar excess, two protein molecules can bind to the same DNA substrate and effect cleavage of both strands (in vitro). In Thermotoga maritima (strain ATCC 43589 / DSM 3109 / JCM 10099 / NBRC 100826 / MSB8), this protein is Endonuclease V.